Reading from the N-terminus, the 327-residue chain is CREB homolog crh-1 (327 aa).

Positions 16-75 constitute a KID domain; sequence SPLMMLLFKALQEGGDSEDEARRRREQLNRRPSYRMILKDLETADKVMKKEPEETPPSSV. Disordered regions lie at residues 27-114 and 151-200; these read QEGG…SPYG and KVFP…VQSL. The span at 35 to 44 shows a compositional bias: basic and acidic residues; it reads EARRRREQLN. Residue Ser-48 is modified to Phosphoserine. Residues 52 to 68 are compositionally biased toward basic and acidic residues; the sequence is ILKDLETADKVMKKEPE. Over residues 71–84 the composition is skewed to polar residues; sequence PPSSVDASPLQFQS. Residues 161–172 show a composition bias toward gly residues; the sequence is GLGGGGGGGGVP. Over residues 173–199 the composition is skewed to low complexity; the sequence is GPSSGIAGMSVQPPTSSTPSQQQSVQS. The 52-residue stretch at 266–317 folds into the bZIP domain; the sequence is NRKRQVRLLKNREAAKECRRKKKEYVKCLENRVSVLENQNKALIEELKTLKE. The interval 267 to 292 is basic motif; the sequence is RKRQVRLLKNREAAKECRRKKKEYVK. Residues 284–318 are a coiled coil; that stretch reads RRKKKEYVKCLENRVSVLENQNKALIEELKTLKEL. A leucine-zipper region spans residues 294–315; the sequence is LENRVSVLENQNKALIEELKTL.

Belongs to the bZIP family. As to quaternary structure, interacts with CREB-regulated transcription coactivator homolog crtc-1. In terms of processing, transcriptional activity is enhanced by phosphorylation. Phosphorylated by cmk-1. As to expression, expressed widely, including in head neurons AFD, gustatory neurons ASE, the olfactory neurons AWC, and in the ASI sensory neurons, as well as in the intestine and gonads in hermaphrodites.

Its subcellular location is the nucleus. Functionally, transcription factor. Transcriptional activity probably positively regulated by phosphorylation. Modulates expression of target genes, acting by binding to regulatory cAMP response elements (CRE). Acts downstream of the calcium-triggered CaMKK-CaMK1 signaling cascade, consisting of the protein kinase kinase ckk-1 and the protein kinase cmk-1. Plays a role in learning and memory, feeding behavior, stress response, entry into the dauer stage and modulation of lifespan. Involved in commitment to the developmentally arrested larval state known as dauer, acting by positively regulating the expression of dauer-inhibiting TGF-beta-like daf-7 in the ASI neurons. Plays a role in both associative and non-associative long-term memory (LTM). Involved in modulating feeding behavior, acting by regulating transcription of tryptophan hydroxylase tph-1 in serotonergic ADF neurons. Regulates transcription of genes involved in endoplasmic reticulum (ER) stress. Involved in modulation of lifespan, in response to raised temperature, but independently of the heat-shock response pathway, acting by regulating transcription of FMRFamide-like neuropeptides flp-6 in the AFD neuron. Plays a role in associative long-term memory (LTM) and learning. Its function is as follows. Plays a role in associative long-term memory (LTM) and learning; perhaps required at the time of acquisition and/or the consolidation phase of memory formation. This is CREB homolog crh-1 from Caenorhabditis elegans.